The primary structure comprises 88 residues: Large ribosomal subunit protein eL31 (88 aa).

Belongs to the eukaryotic ribosomal protein eL31 family.

The protein is Large ribosomal subunit protein eL31 of Methanoregula boonei (strain DSM 21154 / JCM 14090 / 6A8).